A 409-amino-acid chain; its full sequence is NADH-quinone oxidoreductase subunit 4 (409 aa).

It belongs to the complex I 49 kDa subunit family. NDH-1 is composed of 15 different subunits, Nqo1 to Nqo15. The complex has a L-shaped structure, with the hydrophobic arm (subunits Nqo7, Nqo8 and Nqo10 to Nqo14) embedded in the membrane and the hydrophilic peripheral arm (subunits Nqo1 to Nqo6, Nqo9 and Nqo15) protruding into the bacterial cytoplasm. The hydrophilic domain contains all the redox centers. This subunit interacts extensively with Nqo6.

The protein localises to the cell membrane. It catalyses the reaction a quinone + NADH + 5 H(+)(in) = a quinol + NAD(+) + 4 H(+)(out). NDH-1 shuttles electrons from NADH, via FMN and iron-sulfur (Fe-S) centers, to quinones in the respiratory chain. The immediate electron acceptor for the enzyme in this species is menaquinone. Couples the redox reaction to proton translocation (for every two electrons transferred, four hydrogen ions are translocated across the cytoplasmic membrane), and thus conserves the redox energy in a proton gradient required for the synthesis of ATP. The Nqo4 subunit may contain the quinone-binding site. The protein is NADH-quinone oxidoreductase subunit 4 (nqo4) of Thermus thermophilus (strain ATCC 27634 / DSM 579 / HB8).